A 397-amino-acid polypeptide reads, in one-letter code: DnaJ homolog subfamily A member 1 (397 aa).

The region spanning 6 to 68 is the J domain; it reads TYYDVLGVKP…KKRELYDKGG (63 aa). Residue lysine 66 is modified to N6-acetyllysine. Serine 83 is subject to Phosphoserine. A CR-type zinc finger spans residues 121–205; it reads GATRKLALQK…CNGRKIVREK (85 aa). Zn(2+)-binding residues include cysteine 134, cysteine 137, cysteine 150, cysteine 153, cysteine 177, cysteine 180, cysteine 193, and cysteine 196. 4 CXXCXGXG motif repeats span residues 134 to 141, 150 to 157, 177 to 184, and 193 to 200; these read CDKCEGRG, CPNCRGTG, CMECQGHG, and CKSCNGRK. Position 335 is a phosphoserine (serine 335). The segment at 352–397 is disordered; the sequence is VEETDEMDQVELVDFDPNQERRRHYNGEAYEDDEHHPRGGVQCQTS. Positions 353 to 365 are enriched in acidic residues; the sequence is EETDEMDQVELVD. At tyrosine 381 the chain carries Phosphotyrosine. At cysteine 394 the chain carries Cysteine methyl ester. Cysteine 394 carries the S-farnesyl cysteine lipid modification. Positions 395–397 are cleaved as a propeptide — removed in mature form; it reads QTS.

In terms of assembly, identified in a complex with HSPA1B and BAX. Interacts with RNF207.

It localises to the membrane. Its subcellular location is the cytoplasm. It is found in the microsome. The protein resides in the mitochondrion. The protein localises to the nucleus. It localises to the perinuclear region. Its function is as follows. Co-chaperone for HSPA8/Hsc70. Plays a role in protein transport into mitochondria via its role as co-chaperone. Functions as co-chaperone for HSPA1B and negatively regulates the translocation of BAX from the cytosol to mitochondria in response to cellular stress, thereby protecting cells against apoptosis. Stimulates ATP hydrolysis, but not the folding of unfolded proteins mediated by HSPA1A (in vitro). Promotes apoptosis in response to cellular stress mediated by exposure to anisomycin or UV. The sequence is that of DnaJ homolog subfamily A member 1 (DNAJA1) from Chlorocebus aethiops (Green monkey).